The primary structure comprises 274 residues: SPbeta prophage-derived uncharacterized protein YomD (274 aa).

The sequence is that of SPbeta prophage-derived uncharacterized protein YomD (yomD) from Bacillus subtilis (strain 168).